The sequence spans 248 residues: Glycoprotein BILF2 (248 aa).

The signal sequence occupies residues 1–17; sequence MTHLVLLLCCCVGSVCA. The 107-residue stretch at 19 to 125 folds into the Ig-like domain; it reads FSDLVKFENV…NVTLRNCSVA (107 aa). 12 N-linked (GlcNAc...) asparagine; by host glycosylation sites follow: Asn-27, Asn-37, Asn-45, Asn-73, Asn-83, Asn-92, Asn-95, Asn-104, Asn-116, Asn-121, Asn-131, and Asn-144. Cysteines 40 and 115 form a disulfide. Positions 167-191 are disordered; that stretch reads VSHTTSTSHRPHRRPVSKRPTHKPV. The segment covering 175–188 has biased composition (basic residues); it reads HRPHRRPVSKRPTH. A helical membrane pass occupies residues 210-230; sequence WALLLITCAVVAPVLLIIIIS.

Belongs to the Epstein-Barr virus BILF2 protein family.

The protein localises to the membrane. The chain is Glycoprotein BILF2 from Epstein-Barr virus (strain B95-8) (HHV-4).